The primary structure comprises 306 residues: Non-specific ribonucleoside hydrolase RihC (306 aa).

Residue histidine 235 is part of the active site.

Belongs to the IUNH family. RihC subfamily.

Functionally, hydrolyzes both purine and pyrimidine ribonucleosides with a broad-substrate specificity. This is Non-specific ribonucleoside hydrolase RihC from Salmonella enteritidis PT4 (strain P125109).